The primary structure comprises 341 residues: Methionine import ATP-binding protein MetN (341 aa).

An ABC transporter domain is found at 2–241; it reads INLQDVSKVY…PKEQMTKRFV (240 aa). ATP is bound at residue 38–45; it reads GYSGAGKS.

Belongs to the ABC transporter superfamily. Methionine importer (TC 3.A.1.24) family. As to quaternary structure, the complex is composed of two ATP-binding proteins (MetN), two transmembrane proteins (MetP) and a solute-binding protein (MetQ).

It localises to the cell membrane. The enzyme catalyses L-methionine(out) + ATP + H2O = L-methionine(in) + ADP + phosphate + H(+). It catalyses the reaction D-methionine(out) + ATP + H2O = D-methionine(in) + ADP + phosphate + H(+). Functionally, part of the ABC transporter complex MetNPQ involved in methionine import. Responsible for energy coupling to the transport system. It has also been shown to be involved in methionine sulfoxide transport. In Bacillus subtilis (strain 168), this protein is Methionine import ATP-binding protein MetN.